The primary structure comprises 597 residues: MVTRHVLAAALAGSMTSAQRLHPTSQRASDDLIQNLPGLDPAAKVTQHAGRIALHDNDKNKMFYWHFQAAQDPEKAPLVIWLNGGPGCTSMQGLFLGNSPFTLKDDSTIGKNEHSWHEFANLLFVDQPIGTGMSYTKGNDYRLDEETIAQDFYEFLTKFLQRHNKYLSDGDDGVSNSRAVYMFGESHAGRWIPEFSDHIMKQNNDPKNQIKINLDGVGIGNGWVHPRIQYEYSDYAHGLGLLTFGQVRSLKASYAECLAALDAGTYYSRSCLDNMDSITGSVKPGNGGNSLNFYDVRQYLRNVGSYPSGQSNIAKYMNKMEVRKAVHGNEDKNFRFDLCSNGVFRALSKFDGVSTLDKVESLLQQGLRMIFYNGQWDMMCNHYGTEKLLLNLNWNGSDAYQQADKYTWRVQGRKEPAGFAQQGGNLTYLVVTGAGHMVPMDVPDVAADILRRFVNRLEFNDKVQTVVTTRLNATDMEVSFCYSPSVSADPDTSLSTRDQTGANSSQVHIGIAWLWVALVIAVVSSVLAVCVTIVCIRNKRNGKQEHEMITQVSDDEEVNQIEDESEEGFSDEDVGVHVLVSNVSQRATSPRSRVTEV.

Positions 1-18 are cleaved as a signal peptide; that stretch reads MVTRHVLAAALAGSMTSA. Topologically, residues 19–508 are lumenal; sequence QRLHPTSQRA…QTGANSSQVH (490 aa). Active-site residues include S186 and D377. N-linked (GlcNAc...) asparagine glycans are attached at residues N395 and N425. H436 is a catalytic residue. N-linked (GlcNAc...) asparagine glycosylation is found at N472 and N503. The helical transmembrane segment at 509 to 529 threads the bilayer; sequence IGIAWLWVALVIAVVSSVLAV. Residues 530-597 lie on the Cytoplasmic side of the membrane; sequence CVTIVCIRNK…TSPRSRVTEV (68 aa).

This sequence belongs to the peptidase S10 family.

The protein resides in the golgi apparatus. The protein localises to the trans-Golgi network membrane. It carries out the reaction Preferential release of a C-terminal arginine or lysine residue.. Protease with a carboxypeptidase B-like function involved in the C-terminal processing of the lysine and arginine residues from protein precursors. Promotes cell fusion and is involved in the programmed cell death. The polypeptide is Pheromone-processing carboxypeptidase KEX1 (KEX1) (Phytophthora infestans (strain T30-4) (Potato late blight agent)).